We begin with the raw amino-acid sequence, 740 residues long: MFKSTLPIAAAISVALTSMVLPAKALAANEAKTNQFWWPDQLSLSPLRQHGAESNPYGEQFNYAKEFASLDLAMLKKDIQTTLTDSKSWWPADWGHYGPLMIRMAWHSAGVYRVHDGRGGASGGQQRFAPLNSWPDNVNLDKARRLLWPVKQKYGRKISWADLMVLSGNVALESMGFKTFGFAGGRTDDWEPDLVYWGPETAMLSDKRRDKKGKLKGPLAAVEMGLIYVNPEGPHGKPDPLLAANDIRMSFGRMAMNDEEIVALLAGGHTLGKAHGAKKPNGCVGAEPAAADIEAQGLGWKNKCGTGVGADTISSGLEGAWTVTPTQWSSNYLDNLMNFNWVLTKSPAGAKQWIPDNKAAANLVPDAHIPNKRHAPIMFTTDIALKEDPQFRKIVERFRADPTQFDLAFAKAWFKLTHRDMGPRARYVGAEVPSEVLMWQDPIPAINYQLITDKDIKQLKKQITNSGLTTSELVRTAWAAASSHRVTDMRGGANGARINLEPQNSWAVNNPKELGKVLAKLEGIQARFNKKSAKTKVSLADVIVLGGATAIENAAAKAGNRITVPFSPGRADASQAQTNVKSFNYLKPKADGFRNFYTDDSYSSPAEMLVDKANSLGLNVPEMTVLIGGMRALDANYDASSYGVLTNNPGVLTNDFFVNLLDMKTVWSKDKSNAGIYIGHDRASGTEKWQATPVDLIFGSSSELRAIAEVYASDDADKKFINDFTKAWVKVMQLDRFDLK.

The N-terminal stretch at 1–27 (MFKSTLPIAAAISVALTSMVLPAKALA) is a signal peptide. Residues 106–228 (WHSAGVYRVH…LAAVEMGLIY (123 aa)) constitute a cross-link (tryptophyl-tyrosyl-methioninium (Trp-Tyr) (with M-254)). Residue His107 is the Proton acceptor of the active site. Positions 228–254 (YVNPEGPHGKPDPLLAANDIRMSFGRM) form a cross-link, tryptophyl-tyrosyl-methioninium (Tyr-Met) (with W-106). Heme b is bound at residue His269.

It belongs to the peroxidase family. Peroxidase/catalase subfamily. As to quaternary structure, homodimer or homotetramer. Requires heme b as cofactor. Post-translationally, formation of the three residue Trp-Tyr-Met cross-link is important for the catalase, but not the peroxidase activity of the enzyme.

The catalysed reaction is H2O2 + AH2 = A + 2 H2O. It catalyses the reaction 2 H2O2 = O2 + 2 H2O. Functionally, bifunctional enzyme with both catalase and broad-spectrum peroxidase activity. This Colwellia psychrerythraea (strain 34H / ATCC BAA-681) (Vibrio psychroerythus) protein is Catalase-peroxidase.